We begin with the raw amino-acid sequence, 113 residues long: U11-theraphotoxin-Hhn1t (113 aa).

The first 21 residues, 1-21 (MNTVRVTFLLVFVLAVSLGQA), serve as a signal peptide directing secretion. The propeptide occupies 22–74 (DKDENRMEMQEKTEQGKSYLDFAENLLLQKLEELEAKLLEEDSEESRNSRQKR). Residues 60 to 69 (LEEDSEESRN) show a composition bias toward basic and acidic residues. Positions 60 to 83 (LEEDSEESRNSRQKRCIGEGVPCD) are disordered. Disulfide bonds link Cys75–Cys90, Cys82–Cys95, and Cys89–Cys110.

The protein belongs to the neurotoxin 14 (magi-1) family. 01 (HNTX-16) subfamily. Expressed by the venom gland.

Its subcellular location is the secreted. Functionally, probable ion channel inhibitor. This chain is U11-theraphotoxin-Hhn1t, found in Cyriopagopus hainanus (Chinese bird spider).